Reading from the N-terminus, the 243-residue chain is MAGHSKWANIQHRKGRQDAKRGKLWTKIIREITVAARAGGADPDSNPRLRMAWDKATDANMPKDNIQRAIQRGAGGADGESYEEVRYEGYGIGGAAVIVDCMTDNRTRTVAEVRHAFAKHGGNLGQEGSVAFMFKHCGQFVFAPGTSEETVMEAALEAGAEDVATDEEGVIEVVCAPADFTAVRQAFEAAGLKAEVDGVVMKALNETELTGEDAVKMQKLLDVLESLDDVQEVYTNVVFDEAQ.

The disordered stretch occupies residues 1 to 21 (MAGHSKWANIQHRKGRQDAKR).

Belongs to the TACO1 family.

The protein localises to the cytoplasm. The polypeptide is Probable transcriptional regulatory protein BP2308 (Bordetella pertussis (strain Tohama I / ATCC BAA-589 / NCTC 13251)).